We begin with the raw amino-acid sequence, 557 residues long: Formate--tetrahydrofolate ligase (557 aa).

Thr65 to Thr72 contacts ATP.

Belongs to the formate--tetrahydrofolate ligase family.

It catalyses the reaction (6S)-5,6,7,8-tetrahydrofolate + formate + ATP = (6R)-10-formyltetrahydrofolate + ADP + phosphate. It participates in one-carbon metabolism; tetrahydrofolate interconversion. The protein is Formate--tetrahydrofolate ligase of Methylorubrum populi (strain ATCC BAA-705 / NCIMB 13946 / BJ001) (Methylobacterium populi).